Here is a 342-residue protein sequence, read N- to C-terminus: Polygalacturonase inhibitor 2 (342 aa).

Positions 1 to 29 (MTQFNIPVTMSSSLSIILVILVSLSTAHS) are cleaved as a signal peptide. Cystine bridges form between cysteine 32-cysteine 62 and cysteine 63-cysteine 72. Asparagine 64 is a glycosylation site (N-linked (GlcNAc...) (complex) asparagine). LRR repeat units follow at residues 82-107 (NNLD…LPYL), 108-132 (NFLY…LTQL), 133-156 (HYLY…IKTL), 157-180 (VTLD…LPNL), 181-205 (VGIT…SKLF), 206-228 (TSMT…NLNL), 229-252 (AFVD…DKNT), 253-275 (QKIH…SKNL), 276-299 (NGLD…LKFL), and 300-319 (HSLN…GGNL). An N-linked (GlcNAc...) (complex) asparagine glycan is attached at asparagine 141. The N-linked (GlcNAc...) asparagine glycan is linked to asparagine 303. Cystine bridges form between cysteine 310–cysteine 332 and cysteine 334–cysteine 341.

Belongs to the polygalacturonase-inhibiting protein family. Asn-303 is not glycosylated.

Its subcellular location is the secreted. The protein resides in the cell wall. It localises to the membrane. Its function is as follows. Inhibitor of fungal polygalacturonase. It is an important factor for plant resistance to phytopathogenic fungi. Inhibits all polygalacturonases (PG) tested, with the exception of PG from F.oxysporum which was only inhibited at 60%. This is Polygalacturonase inhibitor 2 (PGIP2) from Phaseolus vulgaris (Kidney bean).